A 110-amino-acid chain; its full sequence is MLKILNMNEYISLNHYLILSSLVFTIGMFGLFMNRKNIINILMSIELMLLAVNINFVAFSVYMQELSGQIFSIIILTVAAAETAIGLAILLIYFRNKGSIKITDINKMRG.

3 helical membrane-spanning segments follow: residues 13–33 (LNHY…GLFM), 41–61 (ILMS…AFSV), and 73–93 (IIIL…LLIY).

The protein belongs to the complex I subunit 4L family. In terms of assembly, NDH-1 is composed of 14 different subunits. Subunits NuoA, H, J, K, L, M, N constitute the membrane sector of the complex.

It localises to the cell inner membrane. The catalysed reaction is a quinone + NADH + 5 H(+)(in) = a quinol + NAD(+) + 4 H(+)(out). Its function is as follows. NDH-1 shuttles electrons from NADH, via FMN and iron-sulfur (Fe-S) centers, to quinones in the respiratory chain. The immediate electron acceptor for the enzyme in this species is believed to be ubiquinone. Couples the redox reaction to proton translocation (for every two electrons transferred, four hydrogen ions are translocated across the cytoplasmic membrane), and thus conserves the redox energy in a proton gradient. This Rickettsia prowazekii (strain Madrid E) protein is NADH-quinone oxidoreductase subunit K.